A 183-amino-acid chain; its full sequence is Adenine phosphoribosyltransferase (183 aa).

Belongs to the purine/pyrimidine phosphoribosyltransferase family. In terms of assembly, homodimer.

It is found in the cytoplasm. The enzyme catalyses AMP + diphosphate = 5-phospho-alpha-D-ribose 1-diphosphate + adenine. It functions in the pathway purine metabolism; AMP biosynthesis via salvage pathway; AMP from adenine: step 1/1. In terms of biological role, catalyzes a salvage reaction resulting in the formation of AMP, that is energically less costly than de novo synthesis. In Shewanella halifaxensis (strain HAW-EB4), this protein is Adenine phosphoribosyltransferase.